Consider the following 367-residue polypeptide: Mitogen-activated protein kinase 12 (367 aa).

In terms of domain architecture, Protein kinase spans 27–311 (YQDLQPVGSG…AAEALAHPYF (285 aa)). ATP is bound by residues 33–41 (VGSGAYGAV) and Lys56. Asp153 acts as the Proton acceptor in catalysis. Thr183 bears the Phosphothreonine; by MAP2K3 and MAP2K6 mark. Positions 183-185 (TGY) match the TXY motif. Phosphotyrosine; by MAP2K3 and MAP2K6 is present on Tyr185.

It belongs to the protein kinase superfamily. CMGC Ser/Thr protein kinase family. MAP kinase subfamily. Monomer. Interacts with the PDZ domain of the syntrophin SNTA1. Interacts with LIN7C, SCRIB, SYNJ2BP and SH3BP5. Interacts with PTPN4; this interaction induces the activation of PTPN4 phosphatase activity. Requires Mg(2+) as cofactor. Dually phosphorylated on Thr-183 and Tyr-185 by MAP2K3/MKK3 and MAP2K6/MKK6, which activates the enzyme. Post-translationally, ubiquitinated. Ubiquitination leads to degradation by the proteasome pathway. As to expression, highly expressed in skeletal muscle, lung and testes and also in the heart and thymus of both adult and neonatal rats.

Its subcellular location is the cytoplasm. The protein resides in the nucleus. The protein localises to the mitochondrion. It catalyses the reaction L-seryl-[protein] + ATP = O-phospho-L-seryl-[protein] + ADP + H(+). The enzyme catalyses L-threonyl-[protein] + ATP = O-phospho-L-threonyl-[protein] + ADP + H(+). Activated by phosphorylation on threonine and tyrosine. MAP2K3/MKK3 and MAP2K6/MKK6 are both essential for the activation of MAPK12 induced by environmental stress, whereas MAP2K6/MKK6 is the major MAPK12 activator in response to TNF-alpha. Functionally, serine/threonine kinase which acts as an essential component of the MAP kinase signal transduction pathway. MAPK12 is one of the four p38 MAPKs which play an important role in the cascades of cellular responses evoked by extracellular stimuli such as pro-inflammatory cytokines or physical stress leading to direct activation of transcription factors such as ELK1 and ATF2. Accordingly, p38 MAPKs phosphorylate a broad range of proteins and it has been estimated that they may have approximately 200 to 300 substrates each. Some of the targets are downstream kinases such as MAPKAPK2, which are activated through phosphorylation and further phosphorylate additional targets. Plays a role in myoblast differentiation and also in the down-regulation of cyclin D1 in response to hypoxia in adrenal cells suggesting MAPK12 may inhibit cell proliferation while promoting differentiation. Phosphorylates DLG1. Following osmotic shock, MAPK12 in the cell nucleus increases its association with nuclear DLG1, thereby causing dissociation of DLG1-SFPQ complexes. This function is independent of its catalytic activity and could affect mRNA processing and/or gene transcription to aid cell adaptation to osmolarity changes in the environment. Regulates UV-induced checkpoint signaling and repair of UV-induced DNA damage and G2 arrest after gamma-radiation exposure. MAPK12 is involved in the regulation of SLC2A1 expression and basal glucose uptake in L6 myotubes; and negatively regulates SLC2A4 expression and contraction-mediated glucose uptake in adult skeletal muscle. C-Jun (JUN) phosphorylation is stimulated by MAPK14 and inhibited by MAPK12, leading to a distinct AP-1 regulation. MAPK12 is required for the normal kinetochore localization of PLK1, prevents chromosomal instability and supports mitotic cell viability. MAPK12-signaling is also positively regulating the expansion of transient amplifying myogenic precursor cells during muscle growth and regeneration. This chain is Mitogen-activated protein kinase 12 (Mapk12), found in Rattus norvegicus (Rat).